Reading from the N-terminus, the 26-residue chain is Orexigenic neuropeptide 26RFa (26 aa).

A Phenylalanine amide modification is found at Phe26.

In terms of tissue distribution, brain.

It is found in the secreted. May have orexigenic activity. May promote aldosterone secretion by the adrenal gland. The sequence is that of Orexigenic neuropeptide 26RFa from Pelophylax lessonae (Pool frog).